The following is a 279-amino-acid chain: Formamidopyrimidine-DNA glycosylase (279 aa).

Residue P2 is the Schiff-base intermediate with DNA of the active site. E3 functions as the Proton donor in the catalytic mechanism. The active-site Proton donor; for beta-elimination activity is K57. DNA-binding residues include H90, R109, and R151. The FPG-type zinc finger occupies 236 to 270 (FVYGRTGQPCRVCQTPIAVLRLGQRSTFYCPACQQ). The active-site Proton donor; for delta-elimination activity is the R260.

The protein belongs to the FPG family. In terms of assembly, monomer. Zn(2+) is required as a cofactor.

It catalyses the reaction Hydrolysis of DNA containing ring-opened 7-methylguanine residues, releasing 2,6-diamino-4-hydroxy-5-(N-methyl)formamidopyrimidine.. The catalysed reaction is 2'-deoxyribonucleotide-(2'-deoxyribose 5'-phosphate)-2'-deoxyribonucleotide-DNA = a 3'-end 2'-deoxyribonucleotide-(2,3-dehydro-2,3-deoxyribose 5'-phosphate)-DNA + a 5'-end 5'-phospho-2'-deoxyribonucleoside-DNA + H(+). Involved in base excision repair of DNA damaged by oxidation or by mutagenic agents. Acts as a DNA glycosylase that recognizes and removes damaged bases. Has a preference for oxidized purines, such as 7,8-dihydro-8-oxoguanine (8-oxoG). Has AP (apurinic/apyrimidinic) lyase activity and introduces nicks in the DNA strand. Cleaves the DNA backbone by beta-delta elimination to generate a single-strand break at the site of the removed base with both 3'- and 5'-phosphates. The sequence is that of Formamidopyrimidine-DNA glycosylase from Methylobacillus flagellatus (strain ATCC 51484 / DSM 6875 / VKM B-1610 / KT).